The primary structure comprises 589 residues: MKIGAQVWRALAKSCLLCATLGCLHFPGSRGGKPDFFETKAVNGSLVKSRPVRSVAEAPAPIDCELSTWSSWTACDPCQKKRYRHTYLLRPSQFYGELCDLSDKEVEDCVTNQPCRSQVRCEGFVCAQTGRCVNRRLLCNGDNDCGDQSDEANCRRIYKNCQREMEQYWAIDRLASGINLFTNTFEGPVLDHRYYAGGCSPHYILDTNFRKPYNVESYTPQTKCEYEFTLTEYESYSDFERLVIEKKTHMFNFTSGFKVDGVMDLGIKVESNEGKNYVTRTKRFAHTQSKFLHARSVLEVAHYKLKSRSLMLHYEFLQRVKSLPLEYSYGEYRDLLRDFGTHFITEAVLGGIYEYTLIMNKDAMEQGDYTLSHVTACAGGSFGIGGMVYKVYVKVGVSAKKCSDIMKEINERNKRSTMVEDLVVLVRGGTSEDITALAYKELPTPELMEAWGDAVKYNPAIIKIKAEPLYELVTATDFAYSSTVKQNLKKALEEFQSEVSSCRCAPCRGNGVPVLKGSRCECICPGGFQGTACEVTYRKDIPIDGKWSCWSDWSACSGGHKTRHRQCNNPAPHKGGSPCSGPASETLNC.

The N-terminal stretch at 1 to 31 is a signal peptide; it reads MKIGAQVWRALAKSCLLCATLGCLHFPGSRG. Residues 32-53 constitute a propeptide that is removed on maturation; it reads GKPDFFETKAVNGSLVKSRPVR. The N-linked (GlcNAc...) asparagine glycan is linked to N43. Positions 63-116 constitute a TSP type-1 1 domain; it reads DCELSTWSSWTACDPCQKKRYRHTYLLRPSQFYGELCDLSDKEVEDCVTNQPCR. Cystine bridges form between C64–C99, C75–C109, C78–C115, C121–C132, C126–C145, C139–C154, and C161–C199. Residues W69 and W72 are each glycosylated (C-linked (Man) tryptophan). Residues 120 to 155 enclose the LDL-receptor class A domain; sequence RCEGFVCAQTGRCVNRRLLCNGDNDCGDQSDEANCR. Ca(2+) contacts are provided by L137, N140, D142, D144, D150, and E151. The MACPF domain maps to 157 to 503; that stretch reads IYKNCQREME…EFQSEVSSCR (347 aa). The next 8 beta stranded transmembrane spans lie at 201 to 206, 209 to 213, 251 to 258, 261 to 268, 328 to 335, 338 to 343, 378 to 385, and 391 to 398; these read PHYILD, FRKPY, FNFTSGFK, GVMDLGIK, SYGEYRDL, DFGTHF, AGGSFGIG, and VYVKVGVS. An intrachain disulfide couples C377 to C402. The region spanning 404 to 534 is the EGF-like domain; the sequence is DIMKEINERN…PGGFQGTACE (131 aa). T417 carries the post-translational modification Phosphothreonine. 4 cysteine pairs are disulfide-bonded: C502-C549, C504-C520, C507-C522, and C524-C533. The TSP type-1 2 domain occupies 544–587; it reads DGKWSCWSDWSACSGGHKTRHRQCNNPAPHKGGSPCSGPASETL. W550 and W553 each carry a C-linked (Man) tryptophan glycan. A disulfide bridge links C556 with C589. Residues 570–589 are disordered; sequence PAPHKGGSPCSGPASETLNC.

Belongs to the complement C6/C7/C8/C9 family. Heterotrimer of 3 chains: alpha (C8A), beta (C8B) and gamma (C8G); the alpha and gamma chains are disulfide bonded. Component of the membrane attack complex (MAC), composed of complement C5b, C6, C7, C8A, C8B, C8G and multiple copies of the pore-forming subunit C9. Post-translationally, N-glycosylated; contains one or two bound glycans. Not O-glycosylated.

The protein resides in the secreted. Its subcellular location is the target cell membrane. Membrane attack complex (MAC) assembly is inhibited by CD59, thereby protecting self-cells from damage during complement activation. CD59 acts by binding to the beta-haipins of C8 (C8A and C8B), forming an intermolecular beta-sheet that prevents incorporation of the multiple copies of C9 required for complete formation of the osmolytic pore. MAC assembly is also inhibited by clusterin (CLU) chaperones that inhibit polymerization of C9. Its function is as follows. Component of the membrane attack complex (MAC), a multiprotein complex activated by the complement cascade, which inserts into a target cell membrane and forms a pore, leading to target cell membrane rupture and cell lysis. The MAC is initiated by proteolytic cleavage of C5 into complement C5b in response to the classical, alternative, lectin and GZMK complement pathways. The complement pathways consist in a cascade of proteins that leads to phagocytosis and breakdown of pathogens and signaling that strengthens the adaptive immune system. C8B, together with C8A and C8G, inserts into the target membrane, but does not form pores by itself. During MAC assembly, associates with C5b, C6 and C7 to form the C5b8 intermediate complex that inserts into the target membrane and traverses the bilayer increasing membrane rigidity. The protein is Complement component C8 beta chain (C8b) of Mus musculus (Mouse).